The chain runs to 179 residues: Apoptosis regulator Bcl-2 homolog (179 aa).

The BH1 motif lies at 76 to 95 (ELFKDLINWGRICGFIVFSA). Positions 126-141 (PWMISHGGQEEFLAFS) match the BH2 motif.

This sequence belongs to the Bcl-2 family. As to quaternary structure, interacts with host BECN1 (via BH3 homology domain); this interaction allows the virus to inhibit BECN1, and thus autophagy. Interacts with host BID. Interacts with host BAX.

It is found in the host mitochondrion. It localises to the host endoplasmic reticulum. Suppresses apoptosis in host cell to promote the viral replication. Has the ability to potentially bind to all the members of the proapoptotic Bcl-2 family. Inhibits autophagy by interacting with host Beclin 1 (BECN1). The sequence is that of Apoptosis regulator Bcl-2 homolog from Ornithodoros (relapsing fever ticks).